Here is a 228-residue protein sequence, read N- to C-terminus: MPRLILIRHGQSQWNLENRFTGWWDVDVTEKGAAEAFAAGKLLKDKGVLPTLAFTSLQTRAIKTLHLALEAAGRLWVQEDKDWRLNERHYGGLTGLDKAETAAKHGDEQVKVWRRSFDVPPPPLEAGSEFDLASDPRYDGIAVPATESLKDTIARVLPCWEEKIAPALRAGETVIVSAHGNSLRALVKHLSGISDEDITGLEIPTGQPIVYELDNDLAQVERYYLSER.

Residues Arg-8–Asn-15, Thr-21–Gly-22, Arg-60, Glu-87–Tyr-90, Lys-98, Arg-114–Arg-115, and Gly-180–Asn-181 contribute to the substrate site. His-9 serves as the catalytic Tele-phosphohistidine intermediate. Glu-87 serves as the catalytic Proton donor/acceptor.

It belongs to the phosphoglycerate mutase family. BPG-dependent PGAM subfamily. Homodimer.

It carries out the reaction (2R)-2-phosphoglycerate = (2R)-3-phosphoglycerate. It participates in carbohydrate degradation; glycolysis; pyruvate from D-glyceraldehyde 3-phosphate: step 3/5. Its function is as follows. Catalyzes the interconversion of 2-phosphoglycerate and 3-phosphoglycerate. This chain is 2,3-bisphosphoglycerate-dependent phosphoglycerate mutase, found in Novosphingobium aromaticivorans (strain ATCC 700278 / DSM 12444 / CCUG 56034 / CIP 105152 / NBRC 16084 / F199).